Reading from the N-terminus, the 261-residue chain is [LysW]-aminoadipate/[LysW]-glutamate kinase (261 aa).

Substrate-binding positions include 35 to 36 (GG), Arg62, and Asn166.

This sequence belongs to the acetylglutamate kinase family. LysZ subfamily.

It localises to the cytoplasm. The enzyme catalyses [amino-group carrier protein]-C-terminal-N-(1,4-dicarboxybutan-1-yl)-L-glutamine + ATP = [amino-group carrier protein]-C-terminal-N-(1-carboxy-5-phosphooxy-5-oxopentan-1-yl)-L-glutamine + ADP. The catalysed reaction is [amino-group carrier protein]-C-terminal-gamma-(L-glutamyl)-L-glutamate + ATP = [amino-group carrier protein]-C-terminal-gamma-(5-phospho-L-glutamyl)-L-glutamate + ADP. It functions in the pathway amino-acid biosynthesis; L-lysine biosynthesis via AAA pathway; L-lysine from L-alpha-aminoadipate (Thermus route): step 2/5. Its pathway is amino-acid biosynthesis; L-arginine biosynthesis. Involved in both the arginine and lysine biosynthetic pathways. Phosphorylates the LysW-bound precursors glutamate (for arginine biosynthesis), respectively alpha-aminoadipate (for lysine biosynthesis). This Sulfurisphaera tokodaii (strain DSM 16993 / JCM 10545 / NBRC 100140 / 7) (Sulfolobus tokodaii) protein is [LysW]-aminoadipate/[LysW]-glutamate kinase.